Consider the following 491-residue polypeptide: Aspartyl/glutamyl-tRNA(Asn/Gln) amidotransferase subunit B (491 aa).

Belongs to the GatB/GatE family. GatB subfamily. In terms of assembly, heterotrimer of A, B and C subunits.

The catalysed reaction is L-glutamyl-tRNA(Gln) + L-glutamine + ATP + H2O = L-glutaminyl-tRNA(Gln) + L-glutamate + ADP + phosphate + H(+). It carries out the reaction L-aspartyl-tRNA(Asn) + L-glutamine + ATP + H2O = L-asparaginyl-tRNA(Asn) + L-glutamate + ADP + phosphate + 2 H(+). Functionally, allows the formation of correctly charged Asn-tRNA(Asn) or Gln-tRNA(Gln) through the transamidation of misacylated Asp-tRNA(Asn) or Glu-tRNA(Gln) in organisms which lack either or both of asparaginyl-tRNA or glutaminyl-tRNA synthetases. The reaction takes place in the presence of glutamine and ATP through an activated phospho-Asp-tRNA(Asn) or phospho-Glu-tRNA(Gln). This is Aspartyl/glutamyl-tRNA(Asn/Gln) amidotransferase subunit B from Prochlorococcus marinus (strain NATL2A).